Here is a 1158-residue protein sequence, read N- to C-terminus: Phospholipid-transporting ATPase 1 (1158 aa).

Positions 1–15 (MDPRKSIDKPPHHDP) are enriched in basic and acidic residues. The segment at 1–30 (MDPRKSIDKPPHHDPILGVSSRWSVSSKDN) is disordered. Residues 1-100 (MDPRKSIDKP…TAKYSVFTFL (100 aa)) are Cytoplasmic-facing. Residues 101–122 (PRNLFEQFHRVAYIYFLVIAVL) form a helical membrane-spanning segment. Topologically, residues 123 to 127 (NQLPQ) are extracellular. A helical membrane pass occupies residues 128-150 (LAVFGRGASIMPLAFVLLVSAIK). Residues 151 to 329 (DAYEDFRRHR…SRLETRMNLE (179 aa)) lie on the Cytoplasmic side of the membrane. Residues 330–351 (IILLSLFLIVLCTIAAATAAVW) form a helical membrane-spanning segment. The Extracellular portion of the chain corresponds to 352–391 (LRTHRDDLDTILFYRRKDYSERPGGKNYKYYGWGWEIFFT). The chain crosses the membrane as a helical span at residues 392–409 (FFMAVIVYQIMIPISLYI). At 410–914 (SMELVRIGQA…HGHWNYQRMG (505 aa)) the chain is on the cytoplasmic side. Catalysis depends on Asp457, which acts as the 4-aspartylphosphate intermediate. The Mg(2+) site is built by Asp859 and Asp863. The helical transmembrane segment at 915 to 934 (YMILYNFYRNAVFVLILFWY) threads the bilayer. Residues 935–948 (VLFTCYTLTTAITE) lie on the Extracellular side of the membrane. Residues 949–968 (WSSVLYSVIYTAIPTIIIGI) form a helical membrane-spanning segment. Topologically, residues 969–998 (LDKDLGRQTLLDHPQLYGVGQRAEGYSTTL) are cytoplasmic. A helical transmembrane segment spans residues 999 to 1020 (FWYTMIDTIWQSAAIFFIPMFA). Over 1021–1027 (YWGSTID) the chain is Extracellular. Residues 1028-1050 (TSSLGDLWTIAAVVVVNLHLAMD) form a helical membrane-spanning segment. Over 1051 to 1056 (VIRWNW) the chain is Cytoplasmic. Residues 1057–1077 (ITHAAIWGSIVAACICVIVID) traverse the membrane as a helical segment. Residues 1078–1090 (VIPTLPGYWAIFQ) are Extracellular-facing. Residues 1091 to 1115 (VGKTWMFWFCLLAIVVTSLLPRFAI) form a helical membrane-spanning segment. The Cytoplasmic portion of the chain corresponds to 1116–1158 (KFLVEYYRPSDVRIAREAEKLGTFRESQPVGVEMNLIQDPPRR).

The protein belongs to the cation transport ATPase (P-type) (TC 3.A.3) family. Type IV subfamily. Expressed in roots, flowers, anthers, leaves, vascular tissues and stems.

It is found in the endoplasmic reticulum membrane. Its subcellular location is the cell membrane. The catalysed reaction is ATP + H2O + phospholipidSide 1 = ADP + phosphate + phospholipidSide 2.. Functionally, involved in transport of phospholipids. Contributes to transmembrane flipping of lipids. Has activity with phosphatidylserine and with a much lower efficiency with phosphatidylethanolamine, but not with phosphatidylcholine. The sequence is that of Phospholipid-transporting ATPase 1 from Arabidopsis thaliana (Mouse-ear cress).